The primary structure comprises 122 residues: Probable dihydroneopterin aldolase (122 aa).

Substrate is bound by residues glutamate 21, tyrosine 54, and 73 to 74 (LE). The active-site Proton donor/acceptor is lysine 101.

Belongs to the DHNA family.

It carries out the reaction 7,8-dihydroneopterin = 6-hydroxymethyl-7,8-dihydropterin + glycolaldehyde. The protein operates within cofactor biosynthesis; tetrahydrofolate biosynthesis; 2-amino-4-hydroxy-6-hydroxymethyl-7,8-dihydropteridine diphosphate from 7,8-dihydroneopterin triphosphate: step 3/4. Its function is as follows. Catalyzes the conversion of 7,8-dihydroneopterin to 6-hydroxymethyl-7,8-dihydropterin. The protein is Probable dihydroneopterin aldolase (folB) of Chlamydia muridarum (strain MoPn / Nigg).